The following is a 680-amino-acid chain: tRNA 5-methylaminomethyl-2-thiouridine biosynthesis bifunctional protein MnmC (680 aa).

The segment at 1–267 (MTAEPNKPCQ…MAAILSSDAP (267 aa)) is tRNA (mnm(5)s(2)U34)-methyltransferase. Positions 273 to 680 (IGGGLASAHL…LRKLLKGKSL (408 aa)) are FAD-dependent cmnm(5)s(2)U34 oxidoreductase.

The protein in the N-terminal section; belongs to the methyltransferase superfamily. tRNA (mnm(5)s(2)U34)-methyltransferase family. This sequence in the C-terminal section; belongs to the DAO family. It depends on FAD as a cofactor.

The protein localises to the cytoplasm. The catalysed reaction is 5-aminomethyl-2-thiouridine(34) in tRNA + S-adenosyl-L-methionine = 5-methylaminomethyl-2-thiouridine(34) in tRNA + S-adenosyl-L-homocysteine + H(+). Its function is as follows. Catalyzes the last two steps in the biosynthesis of 5-methylaminomethyl-2-thiouridine (mnm(5)s(2)U) at the wobble position (U34) in tRNA. Catalyzes the FAD-dependent demodification of cmnm(5)s(2)U34 to nm(5)s(2)U34, followed by the transfer of a methyl group from S-adenosyl-L-methionine to nm(5)s(2)U34, to form mnm(5)s(2)U34. The chain is tRNA 5-methylaminomethyl-2-thiouridine biosynthesis bifunctional protein MnmC from Shewanella sp. (strain W3-18-1).